We begin with the raw amino-acid sequence, 837 residues long: Toll-like receptor 4 (837 aa).

Residues Met-1 to Pro-23 form the signal peptide. The Extracellular portion of the chain corresponds to Glu-24 to Lys-629. The cysteines at positions 29 and 38 are disulfide-linked. A glycan (N-linked (GlcNAc...) asparagine) is linked at Asn-33. 5 LRR repeats span residues Ser-53–Ser-74, Glu-77–Ser-98, His-101–Gly-122, Ser-125–His-146, and Thr-149–Ser-170. Asn-171 is a glycosylation site (N-linked (GlcNAc...) asparagine). LRR repeat units lie at residues Asn-174 to His-197, Asn-203 to Glu-223, and Arg-225 to Ile-245. Asn-203 is a glycosylation site (N-linked (GlcNAc...) asparagine). Cys-279 and Cys-304 form a disulfide bridge. N-linked (GlcNAc...) asparagine glycans are attached at residues Asn-280 and Asn-307. LRR repeat units follow at residues Gly-329–Lys-349, Ser-350–Pro-371, Ser-372–Ser-392, Ser-398–Glu-420, Gln-421–Leu-442, Asn-446–His-454, Ser-470–Leu-493, Asn-495–Ser-516, Ser-519–Cys-540, and Ser-543–Gln-563. Cys-388 and Cys-389 form a disulfide bridge. N-linked (GlcNAc...) asparagine glycosylation is found at Asn-495 and Asn-524. N-linked (GlcNAc...) asparagine glycosylation is present at Asn-573. Positions Asn-577–Met-627 constitute an LRRCT domain. Intrachain disulfides connect Cys-581/Cys-607 and Cys-583/Cys-625. Residues Asn-622 and Asn-628 are each glycosylated (N-linked (GlcNAc...) asparagine). A helical membrane pass occupies residues Thr-630–Tyr-650. At Lys-651–Ile-837 the chain is on the cytoplasmic side. In terms of domain architecture, TIR spans Asn-670–Leu-813.

The protein belongs to the Toll-like receptor family. In terms of assembly, belongs to the lipopolysaccharide (LPS) receptor, a multi-protein complex containing at least CD14, LY96 and TLR4. Binding to bacterial LPS leads to homodimerization. Interacts with LY96 via the extracellular domain. Interacts with MYD88 and TIRAP via their respective TIR domains. Interacts with TICAM2. Interacts with NOX4. Interacts with CNPY3 and HSP90B1; this interaction is required for proper folding in the endoplasmic reticulum. Interacts with MAP3K21; this interaction leads to negative regulation of TLR4 signaling. Interacts with CD36, following CD36 stimulation by oxLDL or amyloid-beta 42, and forms a heterodimer with TLR6. The trimeric complex is internalized and triggers inflammatory response. LYN kinase activity facilitates TLR4-TLR6 heterodimerization and signal initiation. Interacts with TICAM1 in response to LPS in a WDFY1-dependent manner. Interacts with WDFY1 in response to LPS. Interacts with SMPDL3B. Interacts with CEACAM1; upon lipopolysaccharide stimulation, forms a complex including TLR4 and the phosphorylated form of SYK and CEACAM1, which in turn, recruits PTPN6 that dephosphorylates SYK, reducing the production of reactive oxygen species (ROS) and lysosome disruption, which in turn, reduces the activity of the inflammasome. Interacts with RFTN1; the interaction occurs in response to lipopolysaccharide stimulation. Interacts with SCIMP; the interaction occurs in response to lipopolysaccharide stimulation and is enhanced by phosphorylation of SCIMP by LYN. This interaction facilitates the phosphorylation of TLR4 by LYN which elicits a selective cytokine response in macrophages. Interacts with TRAF3IP3. Interacts with TREM1; this interaction enhances TLR4-mediated inflammatory response. Interacts with ZG16B/PAUF. Interacts with CD82; this interaction inhibits TLR4-mediated signaling pathway. Post-translationally, phosphorylated on tyrosine residues by LYN after binding lipopolysaccharide. In terms of processing, ubiquitinated by RNF128 via 'Lys-28'-linked polyubiquitin chains, leading to proteasomal degradation.

The protein localises to the cell membrane. Its subcellular location is the early endosome. The protein resides in the cell projection. It is found in the ruffle. In terms of biological role, transmembrane receptor that functions as a pattern recognition receptor recognizing pathogen- and damage-associated molecular patterns (PAMPs and DAMPs) to induce innate immune responses via downstream signaling pathways. At the plasma membrane, cooperates with LY96 to mediate the innate immune response to bacterial lipopolysaccharide (LPS). Also involved in LPS-independent inflammatory responses triggered by free fatty acids, such as palmitate, and Ni(2+). Mechanistically, acts via MYD88, TIRAP and TRAF6, leading to NF-kappa-B activation, cytokine secretion and the inflammatory response. Alternatively, CD14-mediated TLR4 internalization via endocytosis is associated with the initiation of a MYD88-independent signaling via the TICAM1-TBK1-IRF3 axis leading to type I interferon production. In addition to the secretion of proinflammatory cytokines, initiates the activation of NLRP3 inflammasome and formation of a positive feedback loop between autophagy and NF-kappa-B signaling cascade. In complex with TLR6, promotes inflammation in monocytes/macrophages by associating with TLR6 and the receptor CD86. Upon ligand binding, such as oxLDL or amyloid-beta 42, the TLR4:TLR6 complex is internalized and triggers inflammatory response, leading to NF-kappa-B-dependent production of CXCL1, CXCL2 and CCL9 cytokines, via MYD88 signaling pathway, and CCL5 cytokine, via TICAM1 signaling pathway. In myeloid dendritic cells, vesicular stomatitis virus glycoprotein G but not LPS promotes the activation of IRF7, leading to type I IFN production in a CD14-dependent manner. This chain is Toll-like receptor 4 (TLR4), found in Gorilla gorilla gorilla (Western lowland gorilla).